We begin with the raw amino-acid sequence, 112 residues long: UPF0342 protein SSA_1465 (112 aa).

This sequence belongs to the UPF0342 family.

This is UPF0342 protein SSA_1465 from Streptococcus sanguinis (strain SK36).